Here is an 82-residue protein sequence, read N- to C-terminus: Cytochrome b559 subunit alpha (82 aa).

The helical transmembrane segment at 22 to 36 (VIHAVTLPSIFLAGF) threads the bilayer. His-24 is a binding site for heme.

This sequence belongs to the PsbE/PsbF family. As to quaternary structure, heterodimer of an alpha subunit and a beta subunit. PSII is composed of 1 copy each of membrane proteins PsbA, PsbB, PsbC, PsbD, PsbE, PsbF, PsbH, PsbI, PsbJ, PsbK, PsbL, PsbM, PsbT, PsbX, PsbY, PsbZ, Psb30/Ycf12, peripheral proteins PsbO, CyanoQ (PsbQ), PsbU, PsbV and a large number of cofactors. It forms dimeric complexes. Requires heme b as cofactor.

The protein resides in the cellular thylakoid membrane. Its function is as follows. This b-type cytochrome is tightly associated with the reaction center of photosystem II (PSII). PSII is a light-driven water:plastoquinone oxidoreductase that uses light energy to abstract electrons from H(2)O, generating O(2) and a proton gradient subsequently used for ATP formation. It consists of a core antenna complex that captures photons, and an electron transfer chain that converts photonic excitation into a charge separation. In Synechococcus sp. (strain CC9605), this protein is Cytochrome b559 subunit alpha.